The sequence spans 175 residues: Disulfide bond formation protein B 2 (175 aa).

At Met1–Leu9 the chain is on the cytoplasmic side. The chain crosses the membrane as a helical span at residues Phe10–Tyr26. Residues Leu27–Ala44 are Periplasmic-facing. Cys36 and Cys39 are disulfide-bonded. The helical transmembrane segment at Ala45 to Pro61 threads the bilayer. Residues Gly62 to Arg68 lie on the Cytoplasmic side of the membrane. Residues Tyr69–Gly85 traverse the membrane as a helical segment. At Ala86–Glu142 the chain is on the periplasmic side. The helical transmembrane segment at Trp143–Ser161 threads the bilayer. Residues Glu162–Tyr175 are Cytoplasmic-facing.

Belongs to the DsbB family.

The protein resides in the cell inner membrane. In terms of biological role, required for disulfide bond formation in some periplasmic proteins. Acts by oxidizing the DsbA protein. The protein is Disulfide bond formation protein B 2 of Pseudomonas savastanoi pv. phaseolicola (strain 1448A / Race 6) (Pseudomonas syringae pv. phaseolicola (strain 1448A / Race 6)).